We begin with the raw amino-acid sequence, 168 residues long: Putative ankyrin repeat protein RBE_1411 (168 aa).

ANK repeat units lie at residues 59-88, 98-127, and 131-160; these read TIFS…LQHK, YGDT…DLTI, and KGET…ILGN.

This chain is Putative ankyrin repeat protein RBE_1411, found in Rickettsia bellii (strain RML369-C).